The primary structure comprises 428 residues: 3-phosphoshikimate 1-carboxyvinyltransferase (428 aa).

Residues Lys21, Ser22, and Arg26 each coordinate 3-phosphoshikimate. Lys21 is a binding site for phosphoenolpyruvate. 2 residues coordinate phosphoenolpyruvate: Gly91 and Arg119. 3-phosphoshikimate contacts are provided by Ser164, Gln166, Asp313, and Lys340. Phosphoenolpyruvate is bound at residue Gln166. Catalysis depends on Asp313, which acts as the Proton acceptor. Residues Arg344 and Arg386 each contribute to the phosphoenolpyruvate site.

Belongs to the EPSP synthase family. In terms of assembly, monomer.

It localises to the cytoplasm. The enzyme catalyses 3-phosphoshikimate + phosphoenolpyruvate = 5-O-(1-carboxyvinyl)-3-phosphoshikimate + phosphate. The protein operates within metabolic intermediate biosynthesis; chorismate biosynthesis; chorismate from D-erythrose 4-phosphate and phosphoenolpyruvate: step 6/7. Its function is as follows. Catalyzes the transfer of the enolpyruvyl moiety of phosphoenolpyruvate (PEP) to the 5-hydroxyl of shikimate-3-phosphate (S3P) to produce enolpyruvyl shikimate-3-phosphate and inorganic phosphate. The sequence is that of 3-phosphoshikimate 1-carboxyvinyltransferase from Campylobacter jejuni subsp. doylei (strain ATCC BAA-1458 / RM4099 / 269.97).